Here is a 406-residue protein sequence, read N- to C-terminus: L-carnitine CoA-transferase (406 aa).

Positions 98 and 105 each coordinate CoA. Asp-170 (nucleophile) is an active-site residue.

This sequence belongs to the CoA-transferase III family. CaiB subfamily. In terms of assembly, homodimer.

It is found in the cytoplasm. The catalysed reaction is crotonobetainyl-CoA + (R)-carnitine = crotonobetaine + (R)-carnitinyl-CoA. The enzyme catalyses 4-(trimethylamino)butanoyl-CoA + (R)-carnitine = (R)-carnitinyl-CoA + 4-(trimethylamino)butanoate. It participates in amine and polyamine metabolism; carnitine metabolism. Catalyzes the reversible transfer of the CoA moiety from gamma-butyrobetainyl-CoA to L-carnitine to generate L-carnitinyl-CoA and gamma-butyrobetaine. Is also able to catalyze the reversible transfer of the CoA moiety from gamma-butyrobetainyl-CoA or L-carnitinyl-CoA to crotonobetaine to generate crotonobetainyl-CoA. This Proteus mirabilis (strain HI4320) protein is L-carnitine CoA-transferase.